A 315-amino-acid chain; its full sequence is Olfactory receptor 5P59 (315 aa).

At 1–28 the chain is on the extracellular side; that stretch reads MAFLQDGNHTAVTEFILLGLTDDPVLRV. The N-linked (GlcNAc...) asparagine glycan is linked to asparagine 8. A helical transmembrane segment spans residues 29 to 49; sequence VLFTIILCIYLVTVFGNLSTI. At 50-57 the chain is on the cytoplasmic side; it reads LLIRVSSQ. The helical transmembrane segment at 58–78 threads the bilayer; sequence LHHPMYFFLSHLASVDIGISS. Residues 79–102 lie on the Extracellular side of the membrane; that stretch reads SVTPSMLVNFLLERSTISYLGCGI. A disulfide bridge links cysteine 100 with cysteine 193. A helical transmembrane segment spans residues 103-123; that stretch reads QLGSADFIASVECFLLAAMAY. At 124–136 the chain is on the cytoplasmic side; the sequence is DRFMAVCNPLLYS. Residues 137–157 form a helical membrane-spanning segment; that stretch reads TKMSTQVCVQLVVGSYIGGFL. Residues 158-200 are Extracellular-facing; that stretch reads NASLIVTVYFFSFLFCGPNRIDHFFCDFAPLAELSCSDVSVSV. The chain crosses the membrane as a helical span at residues 201 to 221; it reads LIISFSAGSVTMITVFVIVIS. Over 222–241 the chain is Cytoplasmic; that stretch reads YSYILITILKMHSTEGRHKA. The helical transmembrane segment at 242 to 262 threads the bilayer; it reads FSTCTSHLTAVTLYYGTITFI. Residues 263-275 lie on the Extracellular side of the membrane; the sequence is YVMPKSSFSTDQN. Residues 276–296 traverse the membrane as a helical segment; the sequence is KVVSVFYMVMIPMLNPLIYSL. At 297–315 the chain is on the cytoplasmic side; sequence SNNEIKGALKRQLGMKTLS.

Belongs to the G-protein coupled receptor 1 family.

The protein resides in the cell membrane. In terms of biological role, potential odorant receptor. This chain is Olfactory receptor 5P59, found in Mus musculus (Mouse).